The sequence spans 480 residues: tRNA-2-methylthio-N(6)-dimethylallyladenosine synthase (480 aa).

The MTTase N-terminal domain maps to 43-161; that stretch reads KLYCLNTFGC…FPELLYSAMD (119 aa). Residues C52, C88, C122, C198, C202, and C205 each coordinate [4Fe-4S] cluster. The Radical SAM core domain occupies 184–414; the sequence is RKDGVKAWVT…LETQNRISKE (231 aa). A TRAM domain is found at 417-480; sequence DTFLGKVVEV…TWSLEGSIVR (64 aa).

Belongs to the methylthiotransferase family. MiaB subfamily. In terms of assembly, monomer. The cofactor is [4Fe-4S] cluster.

The protein localises to the cytoplasm. It carries out the reaction N(6)-dimethylallyladenosine(37) in tRNA + (sulfur carrier)-SH + AH2 + 2 S-adenosyl-L-methionine = 2-methylsulfanyl-N(6)-dimethylallyladenosine(37) in tRNA + (sulfur carrier)-H + 5'-deoxyadenosine + L-methionine + A + S-adenosyl-L-homocysteine + 2 H(+). Functionally, catalyzes the methylthiolation of N6-(dimethylallyl)adenosine (i(6)A), leading to the formation of 2-methylthio-N6-(dimethylallyl)adenosine (ms(2)i(6)A) at position 37 in tRNAs that read codons beginning with uridine. The chain is tRNA-2-methylthio-N(6)-dimethylallyladenosine synthase from Acetivibrio thermocellus (strain ATCC 27405 / DSM 1237 / JCM 9322 / NBRC 103400 / NCIMB 10682 / NRRL B-4536 / VPI 7372) (Clostridium thermocellum).